The sequence spans 458 residues: Sphingoid long chain base kinase 4 (458 aa).

The DAGKc domain maps to 103 to 241 (KRSRRFIVFI…FDLMTFEQKG (139 aa)). ATP contacts are provided by residues 113–115 (NPH) and threonine 145. Residue 170–173 (GGDG) coordinates substrate. Residue aspartate 172 is the Proton donor/acceptor of the active site. ATP-binding positions include glutamate 177, 202 to 204 (GSG), arginine 266, arginine 272, and 426 to 428 (DGE).

It localises to the cell membrane. It is found in the endoplasmic reticulum membrane. The protein resides in the late endosome membrane. Its subcellular location is the golgi apparatus membrane. It catalyses the reaction a sphingoid base + ATP = a sphingoid 1-phosphate + ADP + H(+). Its function is as follows. Catalyzes the phosphorylation of the sphingoid long chain bases dihydrosphingosine (DHS) and phytosphingosine (PHS) to form dihydrosphingosine 1-phosphate (DHS-1P) and phytosphingosine 1-phosphate (PHS-1P) respectively. Involved in the biosynthesis of sphingolipids and ceramides. Involved in heat-induced transient cell cycle arrest. Accumulation of phosphorylated sphingoid long chain bases (LCBPs) stimulates calcium influx and activates calcineurin signaling. Involved in heat-stress resistance. This is Sphingoid long chain base kinase 4 (lcb4) from Schizosaccharomyces pombe (strain 972 / ATCC 24843) (Fission yeast).